A 311-amino-acid polypeptide reads, in one-letter code: MANPLYQKHIISINDLSRDELNLVLATAAKLKANPQPELLKHKVIASCFFEASTRTRLSFETSMHRLGASVVGFSDSANTSLGKKGETLADTISVISTYVDAIVMRHPQEGAARLATEFSGNVPVLNAGDGSNQHPTQTLLDLFTIQETQGRLDNLHIAMVGDLKYGRTVHSLTQALAKFDGNRFYFIAPDALAMPQYILDMLDEKGIAWSLHSSIEEVMAEVDILYMTRVQKERLDPSEYANVKAQFVLRASDLHNAKTNMKVLHPLPRVDEIATDVDKTPHAWYFQQAGNGIFARQALLALVLNRDLVL.

R55 and T56 together coordinate carbamoyl phosphate. K85 contributes to the L-aspartate binding site. Carbamoyl phosphate is bound by residues R106, H135, and Q138. The L-aspartate site is built by R168 and R230. Carbamoyl phosphate-binding residues include L268 and P269.

It belongs to the aspartate/ornithine carbamoyltransferase superfamily. ATCase family. Heterododecamer (2C3:3R2) of six catalytic PyrB chains organized as two trimers (C3), and six regulatory PyrI chains organized as three dimers (R2).

The enzyme catalyses carbamoyl phosphate + L-aspartate = N-carbamoyl-L-aspartate + phosphate + H(+). The protein operates within pyrimidine metabolism; UMP biosynthesis via de novo pathway; (S)-dihydroorotate from bicarbonate: step 2/3. Catalyzes the condensation of carbamoyl phosphate and aspartate to form carbamoyl aspartate and inorganic phosphate, the committed step in the de novo pyrimidine nucleotide biosynthesis pathway. The protein is Aspartate carbamoyltransferase catalytic subunit of Escherichia fergusonii (strain ATCC 35469 / DSM 13698 / CCUG 18766 / IAM 14443 / JCM 21226 / LMG 7866 / NBRC 102419 / NCTC 12128 / CDC 0568-73).